We begin with the raw amino-acid sequence, 185 residues long: Signal peptidase complex subunit 3 (185 aa).

Over 1-12 (MIVDTFTNRGST) the chain is Cytoplasmic. A helical; Signal-anchor for type II membrane protein transmembrane segment spans residues 13–34 (FFSKLSTVLFFLCAVITFQGVI). Over 35–185 (QRREVELDTP…PFHKIITQPK (151 aa)) the chain is Lumenal. N148 carries an N-linked (GlcNAc...) asparagine glycan.

The protein belongs to the SPCS3 family. As to quaternary structure, component of the signal peptidase complex (SPC) composed of a catalytic subunit sec11 and three accessory subunits spc1, spc2 and spc3. The complex induces a local thinning of the ER membrane which is used to measure the length of the signal peptide (SP) h-region of protein substrates. This ensures the selectivity of the complex towards h-regions shorter than 18-20 amino acids. SPC associates with the translocon complex.

It localises to the endoplasmic reticulum membrane. Its function is as follows. Essential component of the signal peptidase complex (SPC) which catalyzes the cleavage of N-terminal signal sequences from nascent proteins as they are translocated into the lumen of the endoplasmic reticulum. Essential for the SPC catalytic activity, possibly by stabilizing and positioning the active center of the complex close to the lumenal surface. Essential for viability. The sequence is that of Signal peptidase complex subunit 3 (spc3) from Schizosaccharomyces pombe (strain 972 / ATCC 24843) (Fission yeast).